The chain runs to 172 residues: ATP synthase subunit b (172 aa).

The helical transmembrane segment at 27-47 (LAIVIFGLYKFLPPFVGGILE) threads the bilayer.

Belongs to the ATPase B chain family. As to quaternary structure, F-type ATPases have 2 components, F(1) - the catalytic core - and F(0) - the membrane proton channel. F(1) has five subunits: alpha(3), beta(3), gamma(1), delta(1), epsilon(1). F(0) has four main subunits: a(1), b(1), b'(1) and c(10-14). The alpha and beta chains form an alternating ring which encloses part of the gamma chain. F(1) is attached to F(0) by a central stalk formed by the gamma and epsilon chains, while a peripheral stalk is formed by the delta, b and b' chains.

The protein resides in the cellular thylakoid membrane. Functionally, f(1)F(0) ATP synthase produces ATP from ADP in the presence of a proton or sodium gradient. F-type ATPases consist of two structural domains, F(1) containing the extramembraneous catalytic core and F(0) containing the membrane proton channel, linked together by a central stalk and a peripheral stalk. During catalysis, ATP synthesis in the catalytic domain of F(1) is coupled via a rotary mechanism of the central stalk subunits to proton translocation. Component of the F(0) channel, it forms part of the peripheral stalk, linking F(1) to F(0). The protein is ATP synthase subunit b of Prochlorococcus marinus (strain MIT 9303).